The primary structure comprises 453 residues: Indoleamine 2,3-dioxygenase (453 aa).

Histidine 331 is a binding site for heme.

The protein belongs to the indoleamine 2,3-dioxygenase family. Heme serves as cofactor.

The enzyme catalyses D-tryptophan + O2 = N-formyl-D-kynurenine. The catalysed reaction is L-tryptophan + O2 = N-formyl-L-kynurenine. The protein operates within cofactor biosynthesis; NAD(+) biosynthesis. Functionally, catalyzes the first step in tryptophan catabolism in order to supply de novo nicotinamide adenine dinucleotide (NAD(+)) via the kynurenine pathway. Plays a role in the cellular response to telomere uncapping. This is Indoleamine 2,3-dioxygenase (BNA2) from Saccharomyces cerevisiae (strain ATCC 204508 / S288c) (Baker's yeast).